The sequence spans 529 residues: Peptide chain release factor 3 (529 aa).

The tr-type G domain occupies 11–280 (AKRRTFAIIS…GLVEWAPAPM (270 aa)). GTP contacts are provided by residues 20-27 (SHPDAGKT), 88-92 (DTPGH), and 142-145 (NKLD).

This sequence belongs to the TRAFAC class translation factor GTPase superfamily. Classic translation factor GTPase family. PrfC subfamily.

The protein resides in the cytoplasm. In terms of biological role, increases the formation of ribosomal termination complexes and stimulates activities of RF-1 and RF-2. It binds guanine nucleotides and has strong preference for UGA stop codons. It may interact directly with the ribosome. The stimulation of RF-1 and RF-2 is significantly reduced by GTP and GDP, but not by GMP. This Klebsiella pneumoniae subsp. pneumoniae (strain ATCC 700721 / MGH 78578) protein is Peptide chain release factor 3.